The sequence spans 424 residues: UDP-N-acetylglucosamine 1-carboxyvinyltransferase (424 aa).

Residue 22 to 23 (KN) participates in phosphoenolpyruvate binding. Residue arginine 93 participates in UDP-N-acetyl-alpha-D-glucosamine binding. Residue cysteine 117 is the Proton donor of the active site. Cysteine 117 is modified (2-(S-cysteinyl)pyruvic acid O-phosphothioketal). UDP-N-acetyl-alpha-D-glucosamine is bound by residues 162 to 165 (KVSV), aspartate 307, and isoleucine 329.

The protein belongs to the EPSP synthase family. MurA subfamily.

The protein localises to the cytoplasm. The catalysed reaction is phosphoenolpyruvate + UDP-N-acetyl-alpha-D-glucosamine = UDP-N-acetyl-3-O-(1-carboxyvinyl)-alpha-D-glucosamine + phosphate. It functions in the pathway cell wall biogenesis; peptidoglycan biosynthesis. Cell wall formation. Adds enolpyruvyl to UDP-N-acetylglucosamine. The protein is UDP-N-acetylglucosamine 1-carboxyvinyltransferase of Glaesserella parasuis serovar 5 (strain SH0165) (Haemophilus parasuis).